We begin with the raw amino-acid sequence, 91 residues long: Small ribosomal subunit protein bS20 (91 aa).

Disordered regions lie at residues 1 to 26 and 67 to 91; these read MALRHKSAQKRHRQSLKRRMLNRSRK and HKNAAARKKSRLAKAINRVKAAQQS.

This sequence belongs to the bacterial ribosomal protein bS20 family.

Functionally, binds directly to 16S ribosomal RNA. The sequence is that of Small ribosomal subunit protein bS20 from Deinococcus deserti (strain DSM 17065 / CIP 109153 / LMG 22923 / VCD115).